Here is a 148-residue protein sequence, read N- to C-terminus: Large ribosomal subunit protein uL15 (148 aa).

Residues 1-47 are disordered; that stretch reads MAFSLENLRPAPGSRPKSKRVGRGSSSGKGKTSSRGHKGQGRGTGKV.

This sequence belongs to the universal ribosomal protein uL15 family. In terms of assembly, part of the 50S ribosomal subunit.

Binds to the 23S rRNA. The sequence is that of Large ribosomal subunit protein uL15 from Kosmotoga olearia (strain ATCC BAA-1733 / DSM 21960 / TBF 19.5.1).